The sequence spans 595 residues: MSLAFNPAATAFSGNGARSRRENFPVKHVTVRGFPMITNKSSFAVKCNLTTTDLMGKIAEKFKGEDSNFPAAAAVQPAADMPSNLCIIDTLQRLGVDRYFRSEIDTILEDTYRLWQRKERAIFSDTAIHAMAFRLLRVKGYEVSSEELAPYADQEHVDLQTIEVATVIELYRAAQERTGEDESSLKKLHAWTTTFLKQKLLTNSIPDKKLHKLVEYYLKNXHGILDRMGVRQNLDLYDISYYRTSKAANRFSNLCSEDFLAFARQDFNICQAQHQKELQQLQRWYADCKLDTLKYGRDVVRVANFLTSAIIGDPELSDVRIVFAQHIVLVTRIDDFFDHRGSREESYKILELIKEWKEKPAAEYGSEEVEILFTAVYNTVNELAERAHVEQGRSVKDFLIKLWVQILSIFKRELDTWSDDTALTLDDYLSASWVSIGCRICILMSMQFIGIKLSDEMLLSEECIDLCRHVSMVDRLLNDVQTFEKERKENTGNSVTLLLAANKDDSSFTEEEAIRIAKEMAECNRRQLMQIVYKTGTIFPRQCKDMFLKVCRIGCYLYASGDEFTSPQQMMEDMKSLVYEPLTIHPLVANNVRGK.

The transit peptide at 1-47 (MSLAFNPAATAFSGNGARSRRENFPVKHVTVRGFPMITNKSSFAVKC) directs the protein to the chloroplast. Mg(2+) is bound by residues Asp-334, Asp-338, Asn-478, and Glu-486. A DDXXD motif motif is present at residues 334–338 (DDFFD).

It belongs to the terpene synthase family. It depends on Mg(2+) as a cofactor.

It is found in the plastid. The protein localises to the chloroplast. The enzyme catalyses (+)-copalyl diphosphate = miltiradiene + diphosphate. The protein operates within secondary metabolite biosynthesis; terpenoid biosynthesis. In terms of biological role, involved in tanshinone biosynthesis in hairy roots. Catalyzes the conversion of copalyl diphosphate (CPP) to miltiradiene. The chain is Miltiradiene synthase KSL1, chloroplastic from Salvia miltiorrhiza (Chinese sage).